A 105-amino-acid polypeptide reads, in one-letter code: Large ribosomal subunit protein eL36 (105 aa).

A disordered region spans residues 1-36 (MAQERSGIAVGLNKGHKTTPLNTPKTRISRSKGKAS). Over residues 27–36 (RISRSKGKAS) the composition is skewed to basic residues.

The protein belongs to the eukaryotic ribosomal protein eL36 family. Component of the large ribosomal subunit (LSU).

It localises to the cytoplasm. Functionally, component of the ribosome, a large ribonucleoprotein complex responsible for the synthesis of proteins in the cell. The small ribosomal subunit (SSU) binds messenger RNAs (mRNAs) and translates the encoded message by selecting cognate aminoacyl-transfer RNA (tRNA) molecules. The large subunit (LSU) contains the ribosomal catalytic site termed the peptidyl transferase center (PTC), which catalyzes the formation of peptide bonds, thereby polymerizing the amino acids delivered by tRNAs into a polypeptide chain. The nascent polypeptides leave the ribosome through a tunnel in the LSU and interact with protein factors that function in enzymatic processing, targeting, and the membrane insertion of nascent chains at the exit of the ribosomal tunnel. This Emericella nidulans (strain FGSC A4 / ATCC 38163 / CBS 112.46 / NRRL 194 / M139) (Aspergillus nidulans) protein is Large ribosomal subunit protein eL36.